We begin with the raw amino-acid sequence, 628 residues long: Chaperone protein HtpG (628 aa).

An a; substrate-binding region spans residues 1 to 337; that stretch reads MSEKKYTFET…SADLPLNVSR (337 aa). The interval 338-554 is b; that stretch reads EILQHNKVID…DYGMSLHMQK (217 aa). The c stretch occupies residues 555-628; the sequence is MMEEAGQSFM…FVKLVNKYIR (74 aa).

It belongs to the heat shock protein 90 family. Homodimer.

It is found in the cytoplasm. Molecular chaperone. Has ATPase activity. The chain is Chaperone protein HtpG from Francisella tularensis subsp. holarctica (strain FTNF002-00 / FTA).